Here is a 919-residue protein sequence, read N- to C-terminus: DNA double-strand break repair Rad50 ATPase (919 aa).

ATP contacts are provided by residues 33–39 and Gln143; that span reads NGAGKST. Coiled coils occupy residues 208 to 268, 315 to 379, and 414 to 458; these read MTLR…MLVN, HEVA…RRYT, and ESVL…LEES. The Zinc-hook domain occupies 417-516; it reads LERLDAVIND…EASRLQDKRR (100 aa). Zn(2+) is bound by residues Cys464 and Cys467. 3 coiled-coil regions span residues 486–515, 541–595, and 635–749; these read EAER…QDKR, EDLA…LQRL, and AYRS…RKAS.

It belongs to the SMC family. RAD50 subfamily. Homodimer. Forms a heterotetramer composed of two Mre11 subunits and two Rad50 subunits. The cofactor is Zn(2+).

Part of the Rad50/Mre11 complex, which is involved in the early steps of DNA double-strand break (DSB) repair. The complex may facilitate opening of the processed DNA ends to aid in the recruitment of HerA and NurA. Rad50 controls the balance between DNA end bridging and DNA resection via ATP-dependent structural rearrangements of the Rad50/Mre11 complex. This Aeropyrum pernix (strain ATCC 700893 / DSM 11879 / JCM 9820 / NBRC 100138 / K1) protein is DNA double-strand break repair Rad50 ATPase.